The chain runs to 157 residues: Cell cycle regulator of non-homologous end joining (157 aa).

M1 carries the post-translational modification N-acetylmethionine. A KBM motif is present at residues 1–21 (METLKSKTKTRVLPSWMTAPV). Residues 80-91 (KPWEQRSLEATD) show a composition bias toward basic and acidic residues. Residues 80-148 (KPWEQRSLEA…EEEKEEEDAL (69 aa)) are disordered. A compositionally biased stretch (low complexity) spans 96–106 (SPPCSSSPGSS). Positions 147 to 157 (ALKYVREIFFS) match the XLM motif.

Interacts (via KBM motif) with XRCC5/Ku80 and XRCC6/Ku70 heterodimer. Interacts (via XLF motif) with TRIM28/KAP1, ATM, MRE11, NBN and RAD50. Interacts with splicing factor SF3B1. Interacts with ERCC6L2; this interaction is DNA independent.

Its subcellular location is the cytoplasm. It is found in the nucleus. The protein localises to the chromosome. In terms of biological role, cell-cycle-specific regulator of classical non-homologous end joining (NHEJ) of DNA double-strand break (DSB) repair, which can act both as an activator or inhibitor of NHEJ, depending on the cell cycle phase. Acts as a regulator of DNA repair pathway choice by specifically inhibiting classical NHEJ during the S and G2 phases, thereby promoting error-free repair by homologous recombination during cell cycle phases when sister chromatids are present. Preferentially protects single-stranded overhangs at break sites by inhibiting classical NHEJ, thereby creating a local environment that favors homologous recombination. Acts via interaction with XRCC5/Ku80 and XRCC6/Ku70. In contrast, acts as an activator of NHEJ during G1 phase of the cell cycle: promotes classical NHEJ in G1 phase cells via multivalent interactions that increase the affinity of DNA damage response proteins for DSB-associated chromatin. Also involved in immunoglobulin V(D)J recombination. May also act as an indirect regulator of proteasome. This is Cell cycle regulator of non-homologous end joining from Mus musculus (Mouse).